Consider the following 673-residue polypeptide: Paralemmin-3 (673 aa).

Coiled coils occupy residues 4–49 (SSLY…LRER) and 75–101 (GQAQARIRNLEDSLFTLQSQLQLLQSA). Disordered regions lie at residues 49–78 (RWLMDGAAAVPEPSEDPTSKDPQSPEGQAQ) and 99–213 (QSAS…GEAK). A compositionally biased stretch (polar residues) spans 123–137 (LSQSIVEAGSVGQTD). S124 and S143 each carry phosphoserine. Phosphothreonine is present on T151. Phosphoserine is present on residues S155, S157, and S260. Disordered stretches follow at residues 295–343 (VPEV…SFIW) and 356–673 (LLVE…CAVM). T301 carries the post-translational modification Phosphothreonine. The residue at position 325 (S325) is a Phosphoserine. Residues 327–338 (EGDGQGGSGGEE) are compositionally biased toward gly residues. Phosphoserine is present on residues S375 and S420. 2 stretches are compositionally biased toward basic and acidic residues: residues 392–477 (EAEK…KRGA) and 487–532 (GVEK…EKTQ). 2 positions are modified to phosphoserine: S544 and S660. S-palmitoyl cysteine attachment occurs at residues C667 and C669. C670 carries the post-translational modification Cysteine methyl ester. The S-farnesyl cysteine moiety is linked to residue C670. The propeptide at 671–673 (AVM) is removed in mature form.

The protein belongs to the paralemmin family. As to quaternary structure, interacts with SIGIRR. Post-translationally, palmitoylated on Cys-667 and Cys-669 and prenylated on Cys-670; which is required for membrane association.

It localises to the cytoplasm. The protein resides in the cell membrane. Functionally, ATP-binding protein, which may act as a adapter in the Toll-like receptor (TLR) signaling. The sequence is that of Paralemmin-3 (PALM3) from Homo sapiens (Human).